The chain runs to 262 residues: 5-methyltetrahydrofolate:corrinoid/iron-sulfur protein co-methyltransferase (262 aa).

A Pterin-binding domain is found at 1 to 246; it reads MLIIGERING…ETAATAEILL (246 aa). (6S)-5-methyl-5,6,7,8-tetrahydrofolate is bound by residues asparagine 96 and aspartate 160. Lysine 184 serves as a coordination point for Ca(2+). (6S)-5-methyl-5,6,7,8-tetrahydrofolate contacts are provided by asparagine 199, glutamine 202, and arginine 207. 202 to 203 provides a ligand contact to methylcob(III)alamin; that stretch reads QN. Residues glycine 222 and aspartate 224 each contribute to the Ca(2+) site.

Belongs to the vitamin-B12 dependent methionine synthase family. Heterohexamer composed of 2 subunits of AcsC, 2 subunits of AcsD and 2 subunits of AcsE. Ca(2+) serves as cofactor.

The enzyme catalyses methyl-Co(III)-[corrinoid Fe-S protein] + (6S)-5,6,7,8-tetrahydrofolate = Co(I)-[corrinoid Fe-S protein] + (6S)-5-methyl-5,6,7,8-tetrahydrofolate + H(+). Functionally, methyltransferase that mediates the transfer of a N5-methyl group of (6S)-methyltetrahydrofolate to the 5-methoxybenzimidazolylcobamide cofactor of a corrinoid/Fe-S protein (AcsC/AcsD) in the anaerobic acetyl-CoA pathway (Wood-Ljungdahl pathway) of carbon monoxide and carbon dioxide fixation. In Moorella thermoacetica (Clostridium thermoaceticum), this protein is 5-methyltetrahydrofolate:corrinoid/iron-sulfur protein co-methyltransferase (acsE).